A 178-amino-acid chain; its full sequence is Signal peptidase complex subunit 2 (178 aa).

The Cytoplasmic portion of the chain corresponds to 1–37; the sequence is MSSAKPINVYSIPELNQALDEALPSVFARLNYERSYA. The helical transmembrane segment at 38 to 58 threads the bilayer; the sequence is LLDAKLYIGYSIAVVAGLSFF. Residues 59–67 lie on the Lumenal side of the membrane; that stretch reads LDKKFERDQ. Residues 68–88 traverse the membrane as a helical segment; it reads IVTYQKLLVGAYFVLSLLFWY. Over 89–178 the chain is Cytoplasmic; sequence FSRFIEKGTV…HNVLDTKKNE (90 aa).

It belongs to the SPCS2 family. As to quaternary structure, component of the signal peptidase complex (SPC) composed of a catalytic subunit SEC11 and three accessory subunits SPC1, SPC2 and SPC3. The complex induces a local thinning of the ER membrane which is used to measure the length of the signal peptide (SP) h-region of protein substrates. This ensures the selectivity of the complex towards h-regions shorter than 18-20 amino acids. SPC associates with the translocon complex. Interacts with SBH1 and SEB2/SBH2.

It is found in the endoplasmic reticulum membrane. Component of the signal peptidase complex (SPC) which catalyzes the cleavage of N-terminal signal sequences from nascent proteins as they are translocated into the lumen of the endoplasmic reticulum. Enhances the enzymatic activity of SPC and facilitates the interactions between different components of the translocation site. The chain is Signal peptidase complex subunit 2 (SPC2) from Saccharomyces cerevisiae (strain ATCC 204508 / S288c) (Baker's yeast).